The primary structure comprises 753 residues: Inactive protein-tyrosine phosphatase egg-4 (753 aa).

Disordered regions lie at residues 26-46 and 75-145; these read TSLQ…STDN and SFRK…SGHG. Over residues 35–46 the composition is skewed to low complexity; the sequence is NTDDSSADSTDN. Basic and acidic residues-rich tracts occupy residues 84-94 and 129-145; these read AQKDRRSKERL and VSEK…SGHG. A Tyrosine-protein phosphatase domain is found at 408–661; the sequence is MERRFEILEN…IFVHRLVAFF (254 aa).

This sequence belongs to the protein-tyrosine phosphatase family. Part of a complex, consisting of pseudophosphatases egg-3, egg-4, egg-5 and kinase mbk-2; this complex is required for the oocyte-to-zygote transition. Interacts (via tyrosine-protein phosphatase domain) with kinase mbk-2 (via 'Tyr-619' and 'Tyr-621'); mbk-2 tyrosine phosphorylation enhances the interaction. The interaction inhibits mbk-2 kinase activity and is required for mbk-2 oocyte cortex localization. Interacts with egg-3.

It is found in the cytoplasm. It localises to the cell cortex. Functionally, inactive phosphatase which acts redundantly with egg-5 in the oocyte-to-zygote transition. Required for the polarization of cortical actin cytoskeleton rearrangement in the oocyte before and after fertilization. Together with egg-5, required for the cortical localization of kinase mbk-2 and for the inhibition of mbk-2 kinase activity in maturing oocyte until the end of meiosis I. Also required for kinase mbk-2, pseudophosphatase egg-3 and chitin synthase chs-1 localization to cytoplasmic foci after fertilization. In Caenorhabditis elegans, this protein is Inactive protein-tyrosine phosphatase egg-4.